A 798-amino-acid polypeptide reads, in one-letter code: Probable serine/threonine-protein kinase DDB_G0276461 (798 aa).

The Protein kinase domain maps to 54-324; the sequence is VTEVKLVAEG…DLLNYLNEIR (271 aa). Residues 60 to 68 and Lys82 contribute to the ATP site; that span reads VAEGGFGFV. Asp185 serves as the catalytic Proton acceptor. Disordered stretches follow at residues 330 to 538, 553 to 645, and 659 to 798; these read GLQT…NGNF, TNGS…SYNN, and SSAS…FGIL. Composition is skewed to low complexity over residues 335–406, 429–490, 506–538, 557–603, 611–642, and 659–678; these read SSNN…NTPN, SNSN…NNNN, PSPSNSNSNVIINNTNSSGKNNQNKSNSGNGNF, TNFE…INNS, SSGSLPQSRQSSFNSTPQQQQQQFNSSTNSGS, and SSASISSSGGVSNNSDNSWN. The span at 679–697 shows a compositional bias: polar residues; the sequence is VTLTPSQSNKNSTGNLKPL. The span at 698-716 shows a compositional bias: low complexity; that stretch reads NNNNNNNNNNNNRFANNTN. Positions 717–769 are enriched in polar residues; it reads SSRDYSFDFSSPNTSNNNDFGSFVQPSSSSSLNTTHFSKPNYNVNLNQTTSMT. Positions 770–790 are enriched in low complexity; sequence NNYNNNNYNNNNNSNNNNNNS.

The protein belongs to the protein kinase superfamily. Ser/Thr protein kinase family.

It catalyses the reaction L-seryl-[protein] + ATP = O-phospho-L-seryl-[protein] + ADP + H(+). The enzyme catalyses L-threonyl-[protein] + ATP = O-phospho-L-threonyl-[protein] + ADP + H(+). The chain is Probable serine/threonine-protein kinase DDB_G0276461 from Dictyostelium discoideum (Social amoeba).